The chain runs to 217 residues: Peptide methionine sulfoxide reductase MsrA (217 aa).

Residue Cys-56 is part of the active site.

This sequence belongs to the MsrA Met sulfoxide reductase family.

The catalysed reaction is L-methionyl-[protein] + [thioredoxin]-disulfide + H2O = L-methionyl-(S)-S-oxide-[protein] + [thioredoxin]-dithiol. The enzyme catalyses [thioredoxin]-disulfide + L-methionine + H2O = L-methionine (S)-S-oxide + [thioredoxin]-dithiol. In terms of biological role, has an important function as a repair enzyme for proteins that have been inactivated by oxidation. Catalyzes the reversible oxidation-reduction of methionine sulfoxide in proteins to methionine. This chain is Peptide methionine sulfoxide reductase MsrA, found in Corynebacterium glutamicum (strain ATCC 13032 / DSM 20300 / JCM 1318 / BCRC 11384 / CCUG 27702 / LMG 3730 / NBRC 12168 / NCIMB 10025 / NRRL B-2784 / 534).